We begin with the raw amino-acid sequence, 447 residues long: Argininosuccinate synthase (447 aa).

ATP-binding positions include 17-25 (AFSGGLDTS) and alanine 43. Tyrosine 99 is a binding site for L-citrulline. Residues glycine 129 and threonine 131 each coordinate ATP. Threonine 131, asparagine 135, and aspartate 136 together coordinate L-aspartate. Asparagine 135 is an L-citrulline binding site. Residue aspartate 136 coordinates ATP. Arginine 139 and serine 192 together coordinate L-citrulline. Aspartate 194 contributes to the ATP binding site. L-citrulline-binding residues include threonine 201, glutamate 203, and glutamate 280.

This sequence belongs to the argininosuccinate synthase family. Type 2 subfamily. In terms of assembly, homotetramer.

It localises to the cytoplasm. The catalysed reaction is L-citrulline + L-aspartate + ATP = 2-(N(omega)-L-arginino)succinate + AMP + diphosphate + H(+). Its pathway is amino-acid biosynthesis; L-arginine biosynthesis; L-arginine from L-ornithine and carbamoyl phosphate: step 2/3. The protein is Argininosuccinate synthase of Escherichia coli O8 (strain IAI1).